We begin with the raw amino-acid sequence, 125 residues long: Small ribosomal subunit protein uS12c (125 aa).

A disordered region spans residues 104–125 (ASGVKDRKQGRSKYGGKRPKGD). Over residues 113–125 (GRSKYGGKRPKGD) the composition is skewed to basic residues.

Belongs to the universal ribosomal protein uS12 family. In terms of assembly, part of the 30S ribosomal subunit.

Its subcellular location is the plastid. The protein localises to the chloroplast. Its function is as follows. With S4 and S5 plays an important role in translational accuracy. Located at the interface of the 30S and 50S subunits. This chain is Small ribosomal subunit protein uS12c (rps12), found in Emiliania huxleyi (Coccolithophore).